The sequence spans 406 residues: Arginine deiminase (406 aa).

C396 functions as the Amidino-cysteine intermediate in the catalytic mechanism.

It belongs to the arginine deiminase family.

Its subcellular location is the cytoplasm. It catalyses the reaction L-arginine + H2O = L-citrulline + NH4(+). It functions in the pathway amino-acid degradation; L-arginine degradation via ADI pathway; carbamoyl phosphate from L-arginine: step 1/2. The chain is Arginine deiminase from Vibrio vulnificus (strain CMCP6).